Consider the following 217-residue polypeptide: LexA repressor (217 aa).

The segment at residues 28-48 (RAEIAAEFGFSSPNAAEEHLR) is a DNA-binding region (H-T-H motif). Catalysis depends on for autocatalytic cleavage activity residues serine 136 and lysine 173.

The protein belongs to the peptidase S24 family. As to quaternary structure, homodimer.

It catalyses the reaction Hydrolysis of Ala-|-Gly bond in repressor LexA.. Its function is as follows. Represses a number of genes involved in the response to DNA damage (SOS response), including recA and lexA. In the presence of single-stranded DNA, RecA interacts with LexA causing an autocatalytic cleavage which disrupts the DNA-binding part of LexA, leading to derepression of the SOS regulon and eventually DNA repair. The sequence is that of LexA repressor from Cupriavidus taiwanensis (strain DSM 17343 / BCRC 17206 / CCUG 44338 / CIP 107171 / LMG 19424 / R1) (Ralstonia taiwanensis (strain LMG 19424)).